Reading from the N-terminus, the 96-residue chain is Large ribosomal subunit protein eL43 (96 aa).

Zn(2+) contacts are provided by C41, C44, C59, and C62. The C4-type zinc-finger motif lies at 41–62 (CPVCAFPKLKRAGTSIWVCEKC).

Belongs to the eukaryotic ribosomal protein eL43 family. Putative zinc-binding subfamily. Part of the 50S ribosomal subunit. The cofactor is Zn(2+).

In terms of biological role, binds to the 23S rRNA. The chain is Large ribosomal subunit protein eL43 from Methanococcus maripaludis (strain DSM 14266 / JCM 13030 / NBRC 101832 / S2 / LL).